Consider the following 266-residue polypeptide: Proline-rich protein 23A (266 aa).

Low complexity predominate over residues 1–18; it reads MGSRPRSPSAFPAPWWGQ. 2 disordered regions span residues 1 to 47 and 197 to 266; these read MGSR…SLED and EPCA…LFQE. A compositionally biased stretch (pro residues) spans 227–238; the sequence is PSSPLQPLPPSP. The span at 255–266 shows a compositional bias: basic residues; sequence PPCKARRRLFQE.

The protein belongs to the PRR23 family.

In Homo sapiens (Human), this protein is Proline-rich protein 23A (PRR23A).